A 273-amino-acid polypeptide reads, in one-letter code: Dermonecrotic toxin SdSicTox-betaIIB1bxi (273 aa).

Residue histidine 4 is part of the active site. 2 residues coordinate Mg(2+): glutamate 24 and aspartate 26. Histidine 40 functions as the Nucleophile in the catalytic mechanism. 2 disulfide bridges follow: cysteine 44–cysteine 50 and cysteine 46–cysteine 189. Aspartate 84 provides a ligand contact to Mg(2+).

Belongs to the arthropod phospholipase D family. Class II subfamily. It depends on Mg(2+) as a cofactor. As to expression, expressed by the venom gland.

Its subcellular location is the secreted. It carries out the reaction an N-(acyl)-sphingosylphosphocholine = an N-(acyl)-sphingosyl-1,3-cyclic phosphate + choline. It catalyses the reaction an N-(acyl)-sphingosylphosphoethanolamine = an N-(acyl)-sphingosyl-1,3-cyclic phosphate + ethanolamine. The catalysed reaction is a 1-acyl-sn-glycero-3-phosphocholine = a 1-acyl-sn-glycero-2,3-cyclic phosphate + choline. The enzyme catalyses a 1-acyl-sn-glycero-3-phosphoethanolamine = a 1-acyl-sn-glycero-2,3-cyclic phosphate + ethanolamine. Its function is as follows. Dermonecrotic toxins cleave the phosphodiester linkage between the phosphate and headgroup of certain phospholipids (sphingolipid and lysolipid substrates), forming an alcohol (often choline) and a cyclic phosphate. This toxin acts on sphingomyelin (SM). It may also act on ceramide phosphoethanolamine (CPE), lysophosphatidylcholine (LPC) and lysophosphatidylethanolamine (LPE), but not on lysophosphatidylserine (LPS), and lysophosphatidylglycerol (LPG). It acts by transphosphatidylation, releasing exclusively cyclic phosphate products as second products. Induces dermonecrosis, hemolysis, increased vascular permeability, edema, inflammatory response, and platelet aggregation. This is Dermonecrotic toxin SdSicTox-betaIIB1bxi from Sicarius cf. damarensis (strain GJB-2008) (Six-eyed sand spider).